Reading from the N-terminus, the 813-residue chain is Valine--tRNA ligase (813 aa).

Residues 46-56 (PTVSGQLHIGH) carry the 'HIGH' region motif. The short motif at 536–540 (KMSKS) is the 'KMSKS' region element. Lys539 is a binding site for ATP.

The protein belongs to the class-I aminoacyl-tRNA synthetase family. ValS type 2 subfamily. In terms of assembly, monomer.

Its subcellular location is the cytoplasm. It carries out the reaction tRNA(Val) + L-valine + ATP = L-valyl-tRNA(Val) + AMP + diphosphate. In terms of biological role, catalyzes the attachment of valine to tRNA(Val). As ValRS can inadvertently accommodate and process structurally similar amino acids such as threonine, to avoid such errors, it has a 'posttransfer' editing activity that hydrolyzes mischarged Thr-tRNA(Val) in a tRNA-dependent manner. This chain is Valine--tRNA ligase, found in Rickettsia canadensis (strain McKiel).